The following is a 1114-amino-acid chain: Extracellular sulfatase SULF-1 homolog (1114 aa).

Residues 1 to 25 (MMRHSSLRLIIGGLILLLFVLNVFS) form the signal peptide. Ca(2+) contacts are provided by D62, D63, and C98. Catalysis depends on C98, which acts as the Nucleophile. C98 is modified (3-oxoalanine (Cys)). 5 N-linked (GlcNAc...) asparagine glycosylation sites follow: N122, N159, N181, N208, and N251. Positions 327 and 328 each coordinate Ca(2+). Residue N447 is glycosylated (N-linked (GlcNAc...) asparagine). Residues 466-479 (SSSSTAATLMSSTA) show a composition bias toward low complexity. The tract at residues 466–504 (SSSSTAATLMSSTAQQPEDGEEEVETDNEEDDVDGDGAM) is disordered. Positions 483 to 502 (EDGEEEVETDNEEDDVDGDG) are enriched in acidic residues. N-linked (GlcNAc...) asparagine glycans are attached at residues N683, N713, and N743. Positions 781 to 812 (KQLRESNKQALAAGRRNDNRRRNDQSVLDSGA) are disordered. A compositionally biased stretch (basic and acidic residues) spans 795–804 (RRNDNRRRND). N817 carries an N-linked (GlcNAc...) asparagine glycan. Residues 876-895 (ADSKEMAREARRKLKEERQR) show a composition bias toward basic and acidic residues. The disordered stretch occupies residues 876-901 (ADSKEMAREARRKLKEERQRKKERKR). N-linked (GlcNAc...) asparagine glycosylation is found at N945, N955, and N974. Residues 1073 to 1114 (LSKYNRLTGSQQSHMKRRPWKQTPLQQSPRFLRTHSVTPAQA) are disordered. Polar residues predominate over residues 1095-1114 (TPLQQSPRFLRTHSVTPAQA).

The protein belongs to the sulfatase family. Ca(2+) serves as cofactor. In terms of processing, the conversion to 3-oxoalanine (also known as C-formylglycine, FGly), of a serine or cysteine residue in prokaryotes and of a cysteine residue in eukaryotes, is critical for catalytic activity.

Its subcellular location is the endoplasmic reticulum. The protein localises to the golgi apparatus. It localises to the golgi stack. The protein resides in the cell surface. This is Extracellular sulfatase SULF-1 homolog (Sulf1) from Drosophila melanogaster (Fruit fly).